The sequence spans 808 residues: uncharacterized protein (808 aa).

Gly-35 to Thr-42 serves as a coordination point for ATP.

This is an uncharacterized protein from Methanocaldococcus jannaschii (strain ATCC 43067 / DSM 2661 / JAL-1 / JCM 10045 / NBRC 100440) (Methanococcus jannaschii).